The chain runs to 4235 residues: Tenellin synthetase (4235 aa).

In terms of domain architecture, Ketosynthase family 3 (KS3) spans S15–R455. Residues C189, H326, and H375 each act as for beta-ketoacyl synthase activity in the active site. Residues I590–A924 are malonyl-CoA:ACP transacylase (MAT) domain. An N-terminal hotdog fold region spans residues H993–K1135. Residues H993 to P1310 form a dehydratase (DH) domain region. The PKS/mFAS DH domain maps to H993 to S1313. H1025 serves as the catalytic Proton acceptor; for dehydratase activity. The segment at L1158–S1313 is C-terminal hotdog fold. Catalysis depends on D1217, which acts as the Proton donor; for dehydratase activity. Residues R1459–D1652 are methyltransferase (MT) domain. The segment at T2208 to V2381 is ketoreductase (KR) domain. A Carrier 1 domain is found at E2500–A2580. Residue S2540 is modified to O-(pantetheine 4'-phosphoryl)serine. Residues R2587–Q2709 form a disordered region. A compositionally biased stretch (basic and acidic residues) spans N2605–E2619. Polar residues-rich tracts occupy residues G2645–S2659 and Q2666–E2678. Residues S2679 to N2695 show a composition bias toward low complexity. The interval R2720–V3163 is condensation (C) domain. The interval C3197–I3609 is adenylation (A) (KR) domain. A disordered region spans residues D3724 to M3750. The span at A3726–P3742 shows a compositional bias: low complexity. Residues E3748–R3833 form the Carrier 2 domain. The residue at position 3793 (S3793) is an O-(pantetheine 4'-phosphoryl)serine. The disordered stretch occupies residues E3860–T3889. Positions S3865 to S3882 are enriched in low complexity. The segment at L3896–V4141 is reductase (RED) domain.

The protein in the C-terminal section; belongs to the NRP synthetase family.

It participates in secondary metabolite biosynthesis. Functionally, hybrid PKS-NRPS synthetase; part of the gene cluster that mediates the biosynthesis of tenellin-type 2-pyridones, iron-chelating compounds involved in iron stress tolerance, competition with the natural competitor fungus Metarhizium robertsii and insect hosts infection. TenS catalyzes the assembly of the polyketide-amino acid backbone. Because tenS lacks a designated enoylreductase (ER) domain, the required activity is provided the enoyl reductase tenC. Upon formation of the polyketide backbone on the thiotemplate, the triketide is transferred to the NRPS module and linked to tyrosine to produce the pyrrolidine-2-dione intermediates, including pretellinin A, 11-hydropretellenin A, 12-hydropretellenin A, 13-hydropretellenin A, 14-hydropretellenin A, 12-oxopretellenin A and prototellinin D. The pathway begins with the assembly of the polyketide-amino acid backbone by the hybrid PKS-NRPS tenS with the help of the enoyl reductase tenC. These enzymes catalyze the synthesis of the pyrrolidine-2-dione intermediates pretellinin A, 11-hydropretellenin A, 12-hydropretellenin A, 13-hydropretellenin A, 14-hydropretellenin A, 12-oxopretellenin A and prototellinin D. The cytochrome P450 monooxygenase tenA then catalyzes an oxidative ring expansion of pretenellin A and 14-hydropretellenin A to form the 2-pyridone core, leading to pretenellin B and pyridovericin, respectively. The cytochrome P450 monooxygenase tenB is then required for the selective N-hydroxylation of the 2-pyridone nitrogen of yield tellinin and 15-hydroxytellenin (15-HT), respectively. The UDP-glucosyltransferase GT1 and the methyltransferase MT1, located outside the tenS gene cluster, contribute to the stepwise glycosylation and methylation of 15-HT to obtain the glycoside pyridovericin-N-O-(4-O-methyl-beta-D-glucopyranoside) (PMGP). Additional related compounds such as 1-O-methyl-15-HT, (8Z)-1-O-methyl-15-HT, and O-methyltenellin A are also produced but the enzymes involved in their biosynthesis have still to be determined. The chain is Tenellin synthetase from Beauveria bassiana (strain ARSEF 2860) (White muscardine disease fungus).